Consider the following 776-residue polypeptide: Microtubule-associated protein tau (776 aa).

Residues 1-26 (MAEPRQEFDVMEDHAGTYGLGDRKDQ) are compositionally biased toward basic and acidic residues. The tract at residues 1–591 (MAEPRQEFDV…PVPMPDLKNV (591 aa)) is disordered. At A2 the chain carries N-acetylalanine. Phosphotyrosine occurs at positions 18 and 29. K44 is covalently cross-linked (Glycyl lysine isopeptide (Lys-Gly) (interchain with G-Cter in ubiquitin)). Phosphoserine occurs at positions 46 and 61. Residues 61-71 (SETSDAKSTPT) show a composition bias toward polar residues. T69, T71, and T111 each carry phosphothreonine. Composition is skewed to basic and acidic residues over residues 179–189 (EGGRHAPELLK) and 207–216 (GGKERPGIKE). Residues 217 to 228 (EVDEDRDVDESS) show a composition bias toward acidic residues. Residues 314-323 (EQAHSEEHLG) show a composition bias toward basic and acidic residues. Positions 325–340 (AAFPGAPGEGPEAQGP) are enriched in low complexity. Basic and acidic residues-rich tracts occupy residues 344-356 (EDTKEADLPEPSE) and 381-393 (KSKDGTGSDDKKA). Residues 442-453 (VSSVTXRTGSSG) show a composition bias toward low complexity. Residues 455-466 (KEMKLKGADGKT) are compositionally biased toward basic and acidic residues. T470 is subject to Phosphothreonine. At R472 the chain carries Omega-N-methylarginine. Position 480 is an N6,N6-dimethyllysine; alternate (K480). K480 carries the N6-acetyllysine; alternate modification. Phosphothreonine is present on residues T486, T492, and T498. Residues S502, S526, and S530 each carry the phosphoserine modification. Positions 517–528 (KSERGEPPKSGD) are enriched in basic and acidic residues. Residues 529-549 (RSGYSSPGSPGTPGSRSRTPS) show a composition bias toward low complexity. Phosphotyrosine is present on Y532. A phosphoserine mark is found at S533, S534, and S537. Phosphothreonine occurs at positions 540 and 547. S549 carries the phosphoserine modification. T552 carries the post-translational modification Phosphothreonine. K560 is subject to N6-acetyllysine. T566 bears the Phosphothreonine mark. Residues S570 and S572 each carry the phosphoserine modification. Tau/MAP repeat units lie at residues 579–609 (QTAPVPMPDLKNVKSKIGSTENLKHQPGGGK), 610–640 (VQIINKKLDLSNVQSKCGSKDNIKHVPGGGS), 641–671 (VQIVYKPVDLSKVTSKCGSLGNIHHKPGGGQ), and 672–703 (VEVKSEKLDFKDRVQSKIGSLDNITHVPGGGN). K589 is covalently cross-linked (Glycyl lysine isopeptide (Lys-Gly) (interchain with G-Cter in ubiquitin)). An N6-acetyllysine; alternate modification is found at K594. K594 bears the N6-methyllysine; alternate mark. A Glycyl lysine isopeptide (Lys-Gly) (interchain with G-Cter in ubiquitin); alternate cross-link involves residue K594. S597 is modified (phosphoserine). K602 is covalently cross-linked (Glycyl lysine isopeptide (Lys-Gly) (interchain with G-Cter in ubiquitin)). K616 carries the N6-acetyllysine; alternate modification. K616 participates in a covalent cross-link: Glycyl lysine isopeptide (Lys-Gly) (interchain with G-Cter in ubiquitin); alternate. Phosphoserine occurs at positions 620 and 624. N6-acetyllysine is present on K625. Residue S628 is modified to Phosphoserine. At K633 the chain carries N6-acetyllysine; alternate. K633 is covalently cross-linked (Glycyl lysine isopeptide (Lys-Gly) (interchain with G-Cter in ubiquitin); alternate). A Phosphoserine modification is found at S640. K646 carries the N6,N6-dimethyllysine; alternate modification. N6-acetyllysine; alternate occurs at positions 646, 652, and 656. Glycyl lysine isopeptide (Lys-Gly) (interchain with G-Cter in ubiquitin); alternate cross-links involve residues K646, K652, and K656. Residue S659 is modified to Phosphoserine. N6-acetyllysine; alternate is present on residues K666, K678, and K682. Residues K666, K678, and K682 each participate in a glycyl lysine isopeptide (Lys-Gly) (interchain with G-Cter in ubiquitin); alternate cross-link. The residue at position 684 (R684) is an Omega-N-methylarginine. Position 687 is a phosphoserine (S687). Residue K688 forms a Glycyl lysine isopeptide (Lys-Gly) (interchain with G-Cter in ubiquitin) linkage. Phosphoserine is present on S691. K704 is modified (N6-acetyllysine; alternate). A Glycyl lysine isopeptide (Lys-Gly) (interchain with G-Cter in ubiquitin); alternate cross-link involves residue K704. A Glycyl lysine isopeptide (Lys-Gly) (interchain with G-Cter in ubiquitin) cross-link involves residue K710. N6-acetyllysine; alternate is present on K720. Residue K720 forms a Glycyl lysine isopeptide (Lys-Gly) (interchain with G-Cter in ubiquitin); alternate linkage. Position 729 is a phosphotyrosine (Y729). 2 positions are modified to phosphoserine: S731 and S735. The segment at 733–752 (VVSGDTSPRHLSNVSSTGSI) is disordered. The segment covering 736-751 (GDTSPRHLSNVSSTGS) has biased composition (polar residues). T738 carries the phosphothreonine modification. Phosphoserine is present on residues S739, S744, S751, and S757. A Phosphothreonine modification is found at T762.

As to quaternary structure, interacts with MARK1, MARK2, MARK3 and MARK4. Interacts with SQSTM1 when polyubiquitinated. Interacts with PSMC2 through SQSTM1. Interacts with FKBP4. Binds to CSNK1D. Interacts with SGK1. Interacts with EPM2A; the interaction dephosphorylates MAPT at Ser-396. Interacts with PIN1. Interacts with LRRK2. Interacts with LRP1, leading to endocytosis; this interaction is reduced in the presence of LRPAP1/RAP. Post-translationally, polyubiquitinated. Requires functional TRAF6 and may provoke SQSTM1-dependent degradation by the proteasome. In terms of processing, phosphorylation at various serine and threonine residues in S-P or T-P motifs by proline-directed protein kinases (PDPK1, CDK1, CDK5, GSK3, MAPK) (a few sites per protein in interphase, more in mitosis), and at serine residues in K-X-G-S motifs by MAP/microtubule affinity-regulating kinase (MARK1, MARK2, MARK3 or MARK4), causing detachment from microtubules, and their disassembly. Phosphorylation at Ser-597 by BRSK1 and BRSK2 in neurons affects ability to bind microtubules and plays a role in neuron polarization. Phosphorylated by PHK. Dephosphorylation at several serine and threonine residues by the serine/threonine phosphatase PPP5C.

It localises to the cytoplasm. Its subcellular location is the cytosol. The protein resides in the cell membrane. It is found in the cytoskeleton. The protein localises to the cell projection. It localises to the axon. Its subcellular location is the dendrite. Promotes microtubule assembly and stability, and might be involved in the establishment and maintenance of neuronal polarity. The C-terminus binds axonal microtubules while the N-terminus binds neural plasma membrane components, suggesting that tau functions as a linker protein between both. Axonal polarity is predetermined by tau localization (in the neuronal cell) in the domain of the cell body defined by the centrosome. The short isoforms allow plasticity of the cytoskeleton whereas the longer isoforms may preferentially play a role in its stabilization. This Hylobates lar (Lar gibbon) protein is Microtubule-associated protein tau (MAPT).